A 103-amino-acid polypeptide reads, in one-letter code: Integration host factor subunit alpha (103 aa).

The interval 55–74 (CREKPQRPGRNPKTGEEMPI) is disordered.

This sequence belongs to the bacterial histone-like protein family. In terms of assembly, heterodimer of an alpha and a beta chain.

In terms of biological role, this protein is one of the two subunits of integration host factor, a specific DNA-binding protein that functions in genetic recombination as well as in transcriptional and translational control. In Thiobacillus denitrificans (strain ATCC 25259 / T1), this protein is Integration host factor subunit alpha.